Consider the following 229-residue polypeptide: Small ribosomal subunit protein uS3 (229 aa).

The KH type-2 domain occupies 39 to 107 (VRQYLTEKLK…TAQINIAEIR (69 aa)).

Belongs to the universal ribosomal protein uS3 family. Part of the 30S ribosomal subunit. Forms a tight complex with proteins S10 and S14.

Its function is as follows. Binds the lower part of the 30S subunit head. Binds mRNA in the 70S ribosome, positioning it for translation. In Shewanella denitrificans (strain OS217 / ATCC BAA-1090 / DSM 15013), this protein is Small ribosomal subunit protein uS3.